A 414-amino-acid chain; its full sequence is Gamma-glutamyl phosphate reductase (414 aa).

The protein belongs to the gamma-glutamyl phosphate reductase family.

The protein resides in the cytoplasm. The enzyme catalyses L-glutamate 5-semialdehyde + phosphate + NADP(+) = L-glutamyl 5-phosphate + NADPH + H(+). The protein operates within amino-acid biosynthesis; L-proline biosynthesis; L-glutamate 5-semialdehyde from L-glutamate: step 2/2. Its function is as follows. Catalyzes the NADPH-dependent reduction of L-glutamate 5-phosphate into L-glutamate 5-semialdehyde and phosphate. The product spontaneously undergoes cyclization to form 1-pyrroline-5-carboxylate. This Xanthomonas oryzae pv. oryzae (strain KACC10331 / KXO85) protein is Gamma-glutamyl phosphate reductase.